The sequence spans 550 residues: Efflux pump DEP3 (550 aa).

The segment at 1 to 33 (MSEQSTLAGPYTEKPGVESQNPTGDGKASFDET) is disordered. Helical transmembrane passes span 44 to 64 (AIAYAAMLSTTFLFALDNTIV), 78 to 98 (LELISWIGTGFALGTMFILLW), 109 to 129 (WVYIFNILLFEVGSAVCGAAP), 139 to 159 (VIAGIGGSGMYSGTLTYVSVL), 172 to 192 (STVVWGVGSVVGPVVGGAFAA), 199 to 219 (WGFYINLPIGAVFAPAYMILF), 242 to 262 (AVIFLAGSACLTVALTFGGVV), 268 to 288 (GTIIALWTVTGVLLVAFIVLL), 319 to 339 (FLASGIILAMTYYVPLYFQFI), 351 to 371 (LLPLIMFMVAFSMVNGFLMPK), and 373 to 393 (GLIPIWYIVGSALTLIGSALM). Asn-399 is a glycosylation site (N-linked (GlcNAc...) asparagine). The next 3 helical transmembrane spans lie at 410 to 430 (ILVGAGAGCYIVAGFAIVQSL), 439 to 459 (AVGAMTISQDLGMVLFLAICG), and 515 to 535 (SIWAFFMAAAALSFVCSWPLF).

It belongs to the major facilitator superfamily. TCR/Tet family.

Its subcellular location is the cell membrane. Efflux pump; part of the gene cluster that mediates the biosynthesis of depudecin, a highly oxidized eleven-carbon linear polyketide that acts as a histone deacetylase (HDAC) inhibitor and makes a small contribution to pathogenesis. Is presumed either to be responsible for exporting depudecin, to provide self-protection, or both. This Fusarium langsethiae protein is Efflux pump DEP3.